We begin with the raw amino-acid sequence, 893 residues long: Zinc finger protein 281 (893 aa).

4 disordered regions span residues 1-113, 126-148, 153-172, and 198-251; these read MKIG…FPSQ, IKQE…HHHY, AGAE…SHGV, and SGSR…GAVL. Residue Lys-2 forms a Glycyl lysine isopeptide (Lys-Gly) (interchain with G-Cter in SUMO2) linkage. Residues 7 to 36 show a composition bias toward gly residues; that stretch reads FLSGGGGPSSSGGSGSGGSSGSASGGSGGG. Glycyl lysine isopeptide (Lys-Gly) (interchain with G-Cter in SUMO2) cross-links involve residues Lys-100 and Lys-127. The segment covering 127–139 has biased composition (basic and acidic residues); that stretch reads KQEKPADPEEQPS. The segment covering 161–170 has biased composition (gly residues); the sequence is GLGGGEGGSH. Residues 201–216 are compositionally biased toward basic and acidic residues; sequence RTDEHGNQEPKQDANV. Residues Lys-211, Lys-217, Lys-223, Lys-230, Lys-240, and Lys-256 each participate in a glycyl lysine isopeptide (Lys-Gly) (interchain with G-Cter in SUMO2) cross-link. C2H2-type zinc fingers lie at residues 258-280, 286-308, and 314-336; these read HICD…VLIH, FQCS…EKIH, and FGCD…KRTH. Glycyl lysine isopeptide (Lys-Gly) (interchain with G-Cter in SUMO2) cross-links involve residues Lys-298 and Lys-322. The segment at 342 to 364 adopts a C2H2-type 4; atypical zinc-finger fold; that stretch reads YKCDTCQQYFSRTDRLLKHRRTC. Lys-370 participates in a covalent cross-link: Glycyl lysine isopeptide (Lys-Gly) (interchain with G-Cter in SUMO2). Residues 371 to 425 form a disordered region; sequence GAASAEPGSSNHNSMGNLAVLSQGNTSSSRRKSKSKSIAIENKEHKTGKTNESQM. The segment covering 377–396 has biased composition (polar residues); it reads PGSSNHNSMGNLAVLSQGNT. Residue Ser-392 is modified to Phosphoserine. Glycyl lysine isopeptide (Lys-Gly) (interchain with G-Cter in SUMO2) cross-links involve residues Lys-406, Lys-413, Lys-457, and Lys-474. Phosphoserine is present on Ser-481. Glycyl lysine isopeptide (Lys-Gly) (interchain with G-Cter in SUMO2) cross-links involve residues Lys-490, Lys-495, Lys-536, Lys-596, Lys-614, and Lys-619. The tract at residues 613–658 is disordered; the sequence is GKSETQKEDPFNLTEPRVDLHTSGEHSELVQEENLSPGTQTPSNDK. The span at 616–641 shows a compositional bias: basic and acidic residues; sequence ETQKEDPFNLTEPRVDLHTSGEHSEL. Polar residues predominate over residues 645–658; it reads ENLSPGTQTPSNDK. Phosphoserine is present on Ser-648. Glycyl lysine isopeptide (Lys-Gly) (interchain with G-Cter in SUMO2) cross-links involve residues Lys-658 and Lys-667. The span at 775–813 shows a compositional bias: polar residues; sequence SSAFQSSSQKLTSQKEQQKNLESSTSFQIPSQELASQID. Residues 775–815 form a disordered region; sequence SSAFQSSSQKLTSQKEQQKNLESSTSFQIPSQELASQIDPQ. Phosphoserine is present on Ser-782. Residues Lys-784, Lys-789, and Lys-793 each participate in a glycyl lysine isopeptide (Lys-Gly) (interchain with G-Cter in SUMO2) cross-link. Ser-805 carries the post-translational modification Phosphoserine. Residues Lys-816 and Lys-838 each participate in a glycyl lysine isopeptide (Lys-Gly) (interchain with G-Cter in SUMO2) cross-link. A Phosphothreonine modification is found at Thr-886.

This sequence belongs to the krueppel C2H2-type zinc-finger protein family. In terms of assembly, interacts with NANOG. Associates with the NuRD complex.

The protein resides in the nucleus. Its function is as follows. Transcription repressor that plays a role in regulation of embryonic stem cells (ESCs) differentiation. Required for ESCs differentiation and acts by mediating autorepression of NANOG in ESCs: binds to the NANOG promoter and promotes association of NANOG protein to its own promoter and recruits the NuRD complex, which deacetylates histones. Not required for establishement and maintenance of ESCs. Represses the transcription of a number of genes including GAST, ODC1 and VIM. Binds to the G-rich box in the enhancer region of these genes. The chain is Zinc finger protein 281 (Znf281) from Mus musculus (Mouse).